We begin with the raw amino-acid sequence, 276 residues long: Glutamate racemase (276 aa).

Substrate contacts are provided by residues 10 to 11 (DS) and 42 to 43 (YG). Catalysis depends on Cys-74, which acts as the Proton donor/acceptor. 75-76 (NT) contacts substrate. The Proton donor/acceptor role is filled by Cys-185. Substrate is bound at residue 186-187 (TH).

It belongs to the aspartate/glutamate racemases family.

The enzyme catalyses L-glutamate = D-glutamate. The protein operates within cell wall biogenesis; peptidoglycan biosynthesis. Its function is as follows. Provides the (R)-glutamate required for cell wall biosynthesis. The sequence is that of Glutamate racemase from Levilactobacillus brevis (strain ATCC 367 / BCRC 12310 / CIP 105137 / JCM 1170 / LMG 11437 / NCIMB 947 / NCTC 947) (Lactobacillus brevis).